A 233-amino-acid polypeptide reads, in one-letter code: tRNA (guanine-N(7)-)-methyltransferase (233 aa).

Positions Met-1–Lys-21 are disordered. The S-adenosyl-L-methionine site is built by Glu-64, Glu-89, Asp-116, and Asp-138. Asp-138 is an active-site residue. Residues Lys-142, Asp-174, and Thr-212–Glu-215 contribute to the substrate site.

This sequence belongs to the class I-like SAM-binding methyltransferase superfamily. TrmB family.

The catalysed reaction is guanosine(46) in tRNA + S-adenosyl-L-methionine = N(7)-methylguanosine(46) in tRNA + S-adenosyl-L-homocysteine. It participates in tRNA modification; N(7)-methylguanine-tRNA biosynthesis. Its function is as follows. Catalyzes the formation of N(7)-methylguanine at position 46 (m7G46) in tRNA. In Brucella anthropi (strain ATCC 49188 / DSM 6882 / CCUG 24695 / JCM 21032 / LMG 3331 / NBRC 15819 / NCTC 12168 / Alc 37) (Ochrobactrum anthropi), this protein is tRNA (guanine-N(7)-)-methyltransferase.